The chain runs to 1204 residues: Probable cation-transporting ATPase 13A4 (1204 aa).

The Cytoplasmic portion of the chain corresponds to 1 to 32 (MGENPAKSHYAQLNLGEENEMEIFGYKTQCCR). Residues 33-53 (KALCIAGYILSCGALLLLFYW) form a helical membrane-spanning segment. Topologically, residues 54 to 219 (KPEWDVWANC…FSVCLWFAED (166 aa)) are extracellular. Residues 220 to 242 (YMEYAAAIIIMSPLSISLTVYDL) traverse the membrane as a helical segment. Over 243–397 (RQQSVKLQRL…NFRLYRDALR (155 aa)) the chain is Cytoplasmic. A helical transmembrane segment spans residues 398-418 (FLMCLIAFAAIGMIYTVCVFA). The Extracellular portion of the chain corresponds to 419–433 (LNGEEAGEVVKKALD). A helical membrane pass occupies residues 434 to 454 (VITIAVPPALPAALTTGIIYT). Residues 455 to 897 (QRRLKKKGIF…REGRAALVTS (443 aa)) are Cytoplasmic-facing. Catalysis depends on D483, which acts as the 4-aspartylphosphate intermediate. Residues D845 and D849 each coordinate Mg(2+). Residues 898–918 (FCMFKYMALYSTIQYLGVLLL) form a helical membrane-spanning segment. The Extracellular portion of the chain corresponds to 919–929 (YWQLNSFGNYQ). Residues 930–950 (FLFQDLAITTVIGMTMSFTEA) form a helical membrane-spanning segment. Topologically, residues 951–967 (YPKLVPYRPPSQLVSPP) are cytoplasmic. A helical transmembrane segment spans residues 968–988 (LLLSVILNILFSLGMQILGFL). Residues 989–1043 (MVQKQPWYSKTDIHSACLSVNNHVENSSSASSLGLHGVGGGDPTEVDNGYKSYEN) lie on the Extracellular side of the membrane. The helical transmembrane segment at 1044-1064 (TTVWLLSTINCLIIALVFSKG) threads the bilayer. The Cytoplasmic segment spans residues 1065–1075 (KPFRQPIYTNY). A helical membrane pass occupies residues 1076 to 1096 (VFIMVLVGQLGVCLFLVFADI). Residues 1097–1113 (DDLYSKMDLVCTPTTWR) are Extracellular-facing. A helical transmembrane segment spans residues 1114-1134 (ISMVMMLAVTLAVSFLVEEAI). At 1135-1204 (IENRALWLWL…PTFDSNEDAL (70 aa)) the chain is on the cytoplasmic side.

It belongs to the cation transport ATPase (P-type) (TC 3.A.3) family. Type V subfamily.

It is found in the membrane. It catalyses the reaction ATP + H2O = ADP + phosphate + H(+). This chain is Probable cation-transporting ATPase 13A4 (ATP13A4), found in Gallus gallus (Chicken).